Here is a 452-residue protein sequence, read N- to C-terminus: Na(+)/H(+) antiporter NhaA (452 aa).

Helical transmembrane passes span 23 to 43, 71 to 91, 108 to 128, 136 to 156, 165 to 185, 189 to 209, 216 to 236, 316 to 336, 349 to 369, 385 to 405, and 418 to 438; these read MMLFLASVLAVIMANSSLSTI, LLQFVNDVLMVIFFLAVGLEI, LPIVGAIGGMIVPVLFFLLVV, GAAIPMSTDIAFALAALAVLG, VFLTALAVADDIGGIIVIALF, HINIGMLAIAFGILFIMYLMG, LGLYFVCTFFVWLFFLQSGIH, IVGYFVLPLFAFANAGITLGG, VFLGLFVGKPLGIYFFTYGFV, LMAVSLFGGIGFTVSLFIATL, and EAKLGIFVASIFAAVVGIVTL.

It belongs to the NhaA Na(+)/H(+) (TC 2.A.33) antiporter family.

The protein localises to the cell inner membrane. The enzyme catalyses Na(+)(in) + 2 H(+)(out) = Na(+)(out) + 2 H(+)(in). Its function is as follows. Na(+)/H(+) antiporter that extrudes sodium in exchange for external protons. This Porphyromonas gingivalis (strain ATCC 33277 / DSM 20709 / CIP 103683 / JCM 12257 / NCTC 11834 / 2561) protein is Na(+)/H(+) antiporter NhaA.